We begin with the raw amino-acid sequence, 403 residues long: Ribosomal RNA large subunit methyltransferase I (403 aa).

The PUA domain occupies 9–88 (YPRLILSKGR…ESIDIAFFTR (80 aa)).

This sequence belongs to the methyltransferase superfamily. RlmI family.

It localises to the cytoplasm. The enzyme catalyses cytidine(1962) in 23S rRNA + S-adenosyl-L-methionine = 5-methylcytidine(1962) in 23S rRNA + S-adenosyl-L-homocysteine + H(+). In terms of biological role, specifically methylates the cytosine at position 1962 (m5C1962) of 23S rRNA. This chain is Ribosomal RNA large subunit methyltransferase I, found in Salmonella paratyphi C (strain RKS4594).